Here is a 472-residue protein sequence, read N- to C-terminus: POU domain, class 5, transcription factor 1 (472 aa).

Disordered regions lie at residues 127-154 and 187-255; these read MPSE…YHLT and ISQA…LTTE. Polar residues predominate over residues 220–234; that stretch reads TAQNIPSAQAQSAPR. A compositionally biased stretch (low complexity) spans 235–245; the sequence is SSGSSSGGCSN. A compositionally biased stretch (acidic residues) spans 246-255; the sequence is SEEEETLTTE. Positions 249-323 constitute a POU-specific domain; sequence EETLTTEDLE…LLQRWLNEAE (75 aa). The homeobox DNA-binding region spans 343–402; it reads KRKRRTSLEGTVRSALESYFVKCPKPNTLEITHISDDLGLERDVVRVWFCNRRQKGKRLA.

Belongs to the POU transcription factor family. Class-7 subfamily.

It localises to the nucleus. In terms of biological role, involved in early development of embryos, especially in the process of gastrulation. May play an important role in establishing and specifying rhombomeric segments. Seems to be required to maintain the cells in a highly undifferentiated state. In contrast to POU2, T-POU2 lacks DNA-binding activity because of its incomplete pou domain structure. Overexpression of POU2 does not have any effect on development, whereas overexpression of t-POU2 causes developmental retardation or arrest before gastrulation. This is POU domain, class 5, transcription factor 1 (pou5f1) from Danio rerio (Zebrafish).